Reading from the N-terminus, the 98-residue chain is DNA/RNA-binding protein Alba (98 aa).

Lys16 is subject to N6-acetyllysine.

Belongs to the histone-like Alba family. Acetylated. Acetylation at Lys-16 decreases DNA-binding affinity.

The protein localises to the cytoplasm. The protein resides in the chromosome. Its function is as follows. Binds double-stranded DNA tightly but without sequence specificity. Involved in DNA compaction. The chain is DNA/RNA-binding protein Alba from Metallosphaera sedula (strain ATCC 51363 / DSM 5348 / JCM 9185 / NBRC 15509 / TH2).